The chain runs to 505 residues: ATP synthase subunit alpha, chloroplastic (505 aa).

Residue 170–177 (GDRQTGKT) coordinates ATP.

It belongs to the ATPase alpha/beta chains family. As to quaternary structure, F-type ATPases have 2 components, CF(1) - the catalytic core - and CF(0) - the membrane proton channel. CF(1) has five subunits: alpha(3), beta(3), gamma(1), delta(1), epsilon(1). CF(0) has four main subunits: a, b, b' and c.

It is found in the plastid. It localises to the chloroplast thylakoid membrane. It carries out the reaction ATP + H2O + 4 H(+)(in) = ADP + phosphate + 5 H(+)(out). Produces ATP from ADP in the presence of a proton gradient across the membrane. The alpha chain is a regulatory subunit. The protein is ATP synthase subunit alpha, chloroplastic of Carica papaya (Papaya).